We begin with the raw amino-acid sequence, 267 residues long: Tryptophan synthase alpha chain (267 aa).

Catalysis depends on proton acceptor residues Glu-49 and Asp-60.

The protein belongs to the TrpA family. In terms of assembly, tetramer of two alpha and two beta chains.

The enzyme catalyses (1S,2R)-1-C-(indol-3-yl)glycerol 3-phosphate + L-serine = D-glyceraldehyde 3-phosphate + L-tryptophan + H2O. The protein operates within amino-acid biosynthesis; L-tryptophan biosynthesis; L-tryptophan from chorismate: step 5/5. Its function is as follows. The alpha subunit is responsible for the aldol cleavage of indoleglycerol phosphate to indole and glyceraldehyde 3-phosphate. This is Tryptophan synthase alpha chain from Geotalea uraniireducens (strain Rf4) (Geobacter uraniireducens).